A 310-amino-acid chain; its full sequence is HPr kinase/phosphorylase (310 aa).

Residues histidine 138 and lysine 159 contribute to the active site. Residue 153–160 (GGSGVGKS) coordinates ATP. Serine 160 is a Mg(2+) binding site. Catalysis depends on aspartate 177, which acts as the Proton acceptor; for phosphorylation activity. Proton donor; for dephosphorylation activity. Residues 201–210 (LEIRGLGIIN) are important for the catalytic mechanism of both phosphorylation and dephosphorylation. Glutamate 202 provides a ligand contact to Mg(2+). Arginine 243 is a catalytic residue. Positions 264–269 (PVRPGR) are important for the catalytic mechanism of dephosphorylation.

It belongs to the HPrK/P family. As to quaternary structure, homohexamer. It depends on Mg(2+) as a cofactor.

The catalysed reaction is [HPr protein]-L-serine + ATP = [HPr protein]-O-phospho-L-serine + ADP + H(+). It catalyses the reaction [HPr protein]-O-phospho-L-serine + phosphate + H(+) = [HPr protein]-L-serine + diphosphate. Functionally, catalyzes the ATP- as well as the pyrophosphate-dependent phosphorylation of a specific serine residue in HPr, a phosphocarrier protein of the phosphoenolpyruvate-dependent sugar phosphotransferase system (PTS). HprK/P also catalyzes the pyrophosphate-producing, inorganic phosphate-dependent dephosphorylation (phosphorolysis) of seryl-phosphorylated HPr (P-Ser-HPr). The two antagonistic activities of HprK/P are regulated by several intracellular metabolites, which change their concentration in response to the absence or presence of rapidly metabolisable carbon sources (glucose, fructose, etc.) in the growth medium. Also phosphorylates/dephosphorylates the HPr-like catabolite repression protein crh on a specific serine residue. Therefore, by controlling the phosphorylation state of HPr and crh, HPrK/P is a sensor enzyme that plays a major role in the regulation of carbon metabolism and sugar transport: it mediates carbon catabolite repression (CCR), and regulates PTS-catalyzed carbohydrate uptake and inducer exclusion. This is HPr kinase/phosphorylase from Shouchella clausii (strain KSM-K16) (Alkalihalobacillus clausii).